The following is a 249-amino-acid chain: General transcription factor IIF subunit 2 (249 aa).

Ala2 is modified (N-acetylalanine). N6-acetyllysine occurs at positions 22, 33, and 137. Position 142 is a phosphoserine (Ser142). Residues Gly227 and His229 each contribute to the DNA site. A Phosphoserine modification is found at Ser248.

It belongs to the TFIIF beta subunit family. Heterodimer of an alpha and a beta subunit. Interacts with HTATSF1 and GPBP1. Interacts with URI1. Interacts with GTF2B (via N-terminus); this interaction is inhibited in presence of GTF2F1. Part of TBP-based Pol II pre-initiation complex (PIC), in which Pol II core assembles with general transcription factors and other specific initiation factors including GTF2E1, GTF2E2, GTF2F1, GTF2F2, TCEA1, ERCC2, ERCC3, GTF2H2, GTF2H3, GTF2H4, GTF2H5, GTF2A1, GTF2A2, GTF2B and TBP; this large multi-subunit PIC complex mediates DNA unwinding and targets Pol II core to the transcription start site where the first phosphodiester bond forms.

The protein resides in the nucleus. TFIIF is a general transcription initiation factor that binds to RNA polymerase II and helps to recruit it to the initiation complex in collaboration with TFIIB. It promotes transcription elongation. The chain is General transcription factor IIF subunit 2 (Gtf2f2) from Rattus norvegicus (Rat).